The sequence spans 294 residues: 33 kDa chaperonin (294 aa).

Disulfide bonds link Cys235–Cys237 and Cys268–Cys271.

Belongs to the HSP33 family. In terms of processing, under oxidizing conditions two disulfide bonds are formed involving the reactive cysteines. Under reducing conditions zinc is bound to the reactive cysteines and the protein is inactive.

Its subcellular location is the cytoplasm. Its function is as follows. Redox regulated molecular chaperone. Protects both thermally unfolding and oxidatively damaged proteins from irreversible aggregation. Plays an important role in the bacterial defense system toward oxidative stress. This is 33 kDa chaperonin from Proteus mirabilis (strain HI4320).